Consider the following 167-residue polypeptide: UPF0178 protein bll3966 (167 aa).

Belongs to the UPF0178 family.

This Bradyrhizobium diazoefficiens (strain JCM 10833 / BCRC 13528 / IAM 13628 / NBRC 14792 / USDA 110) protein is UPF0178 protein bll3966.